Consider the following 221-residue polypeptide: Probable septum site-determining protein MinC (221 aa).

It belongs to the MinC family. As to quaternary structure, interacts with MinD and FtsZ.

In terms of biological role, cell division inhibitor that blocks the formation of polar Z ring septums. Rapidly oscillates between the poles of the cell to destabilize FtsZ filaments that have formed before they mature into polar Z rings. Prevents FtsZ polymerization. This Shewanella halifaxensis (strain HAW-EB4) protein is Probable septum site-determining protein MinC.